The following is a 386-amino-acid chain: Diaminopimelate decarboxylase (386 aa).

The residue at position 49 (lysine 49) is an N6-(pyridoxal phosphate)lysine. Pyridoxal 5'-phosphate is bound by residues glycine 228 and glutamate 266–arginine 269. 5 residues coordinate substrate: arginine 269, arginine 305, tyrosine 309, glutamate 335, and tyrosine 363. Residue tyrosine 363 coordinates pyridoxal 5'-phosphate.

It belongs to the Orn/Lys/Arg decarboxylase class-II family. LysA subfamily. As to quaternary structure, homodimer. The cofactor is pyridoxal 5'-phosphate.

The catalysed reaction is meso-2,6-diaminopimelate + H(+) = L-lysine + CO2. It participates in amino-acid biosynthesis; L-lysine biosynthesis via DAP pathway; L-lysine from DL-2,6-diaminopimelate: step 1/1. Specifically catalyzes the decarboxylation of meso-diaminopimelate (meso-DAP) to L-lysine. The protein is Diaminopimelate decarboxylase of Bacteroides thetaiotaomicron (strain ATCC 29148 / DSM 2079 / JCM 5827 / CCUG 10774 / NCTC 10582 / VPI-5482 / E50).